Consider the following 535-residue polypeptide: Probable bifunctional tRNA threonylcarbamoyladenosine biosynthesis protein (535 aa).

A kae1 region spans residues 1 to 323 (MICLGLEGTA…YRTDMVEVNW (323 aa)). Residues H106, H110, and Y127 each contribute to the Fe cation site. L-threonylcarbamoyladenylate is bound by residues 127–131 (YVSGG), D159, G172, E176, and N256. A Fe cation-binding site is contributed by D284. The 203-residue stretch at 333–535 (KIPEHLIGKG…DVERRARYVE (203 aa)) folds into the Protein kinase domain. Residues 339–347 (IGKGAEADI) and K360 contribute to the ATP site. The Proton acceptor; for kinase activity role is filled by D451.

It in the N-terminal section; belongs to the KAE1 / TsaD family. The protein in the C-terminal section; belongs to the protein kinase superfamily. Tyr protein kinase family. BUD32 subfamily. Component of the KEOPS complex that consists of Kae1, Bud32, Cgi121 and Pcc1; the whole complex dimerizes. The cofactor is Fe(2+).

The protein resides in the cytoplasm. It catalyses the reaction L-seryl-[protein] + ATP = O-phospho-L-seryl-[protein] + ADP + H(+). The enzyme catalyses L-threonyl-[protein] + ATP = O-phospho-L-threonyl-[protein] + ADP + H(+). It carries out the reaction L-threonylcarbamoyladenylate + adenosine(37) in tRNA = N(6)-L-threonylcarbamoyladenosine(37) in tRNA + AMP + H(+). Its activity is regulated as follows. Activity provided by the Kae1 region seems to be regulated via phosphorylation by the protein kinase Bud32, which is itself activated by Cgi121. Required for the formation of a threonylcarbamoyl group on adenosine at position 37 (t(6)A37) in tRNAs that read codons beginning with adenine. Is a component of the KEOPS complex that is probably involved in the transfer of the threonylcarbamoyl moiety of threonylcarbamoyl-AMP (TC-AMP) to the N6 group of A37. The Kae1 domain likely plays a direct catalytic role in this reaction. The Bud32 domain probably displays kinase activity that regulates Kae1 function. In vitro, exhibits low ATPase activity, but does not bind DNA and does not have endonuclease activity. The polypeptide is Probable bifunctional tRNA threonylcarbamoyladenosine biosynthesis protein (Methanocaldococcus jannaschii (strain ATCC 43067 / DSM 2661 / JAL-1 / JCM 10045 / NBRC 100440) (Methanococcus jannaschii)).